Reading from the N-terminus, the 313-residue chain is Glyoxylate/hydroxypyruvate reductase A (313 aa).

Arginine 228 is an active-site residue. Histidine 276 (proton donor) is an active-site residue.

The protein belongs to the D-isomer specific 2-hydroxyacid dehydrogenase family. GhrA subfamily.

The protein resides in the cytoplasm. It carries out the reaction glycolate + NADP(+) = glyoxylate + NADPH + H(+). The enzyme catalyses (R)-glycerate + NAD(+) = 3-hydroxypyruvate + NADH + H(+). The catalysed reaction is (R)-glycerate + NADP(+) = 3-hydroxypyruvate + NADPH + H(+). Functionally, catalyzes the NADPH-dependent reduction of glyoxylate and hydroxypyruvate into glycolate and glycerate, respectively. The chain is Glyoxylate/hydroxypyruvate reductase A from Yersinia enterocolitica serotype O:8 / biotype 1B (strain NCTC 13174 / 8081).